We begin with the raw amino-acid sequence, 210 residues long: Protein-methionine-sulfoxide reductase heme-binding subunit MsrQ (210 aa).

The next 6 membrane-spanning stretches (helical) occupy residues leucine 8 to phenylalanine 28, valine 37 to threonine 57, leucine 75 to leucine 95, proline 110 to asparagine 130, isoleucine 147 to leucine 167, and glutamate 169 to alanine 189.

It belongs to the MsrQ family. Heterodimer of a catalytic subunit (MsrP) and a heme-binding subunit (MsrQ). It depends on FMN as a cofactor. The cofactor is heme b.

Its subcellular location is the cell inner membrane. In terms of biological role, part of the MsrPQ system that repairs oxidized periplasmic proteins containing methionine sulfoxide residues (Met-O), using respiratory chain electrons. Thus protects these proteins from oxidative-stress damage caused by reactive species of oxygen and chlorine generated by the host defense mechanisms. MsrPQ is essential for the maintenance of envelope integrity under bleach stress, rescuing a wide series of structurally unrelated periplasmic proteins from methionine oxidation. MsrQ provides electrons for reduction to the reductase catalytic subunit MsrP, using the quinone pool of the respiratory chain. The protein is Protein-methionine-sulfoxide reductase heme-binding subunit MsrQ of Pseudomonas syringae pv. syringae (strain B728a).